The chain runs to 553 residues: 5'-nucleotidase domain-containing protein 2 (553 aa).

A disordered region spans residues serine 26 to proline 51. Residue aspartate 106 is the Nucleophile of the active site. Positions 106, 108, and 391 each coordinate Mg(2+). Aspartate 108 acts as the Proton donor in catalysis.

The protein belongs to the 5'(3')-deoxyribonucleotidase family. In terms of assembly, interacts with tyrosine 3-monooxygenase TH; the interaction results in reduced phosphorylation and decreased catalytic activity of TH. As to expression, expressed in eye iridocorneal angle.

The protein localises to the cytoplasm. In terms of biological role, promotes dephosphorylation of tyrosine 3-monooxygenase TH which decreases TH catalytic activity and leads to reduced synthesis of catecholamines including dopamine, noradrenaline and adrenaline. The exact mechanism of activity is unknown but may act as a phosphatase or promote the activity of phosphatases or may inhibit phosphorylation by acting as a barrier to interfere with protein kinase access. The sequence is that of 5'-nucleotidase domain-containing protein 2 (Nt5dc2) from Rattus norvegicus (Rat).